Reading from the N-terminus, the 247-residue chain is Sulfate transporter CysZ (247 aa).

Helical transmembrane passes span 29 to 49 (FVVL…FYLF), 66 to 86 (FLSW…LATF), 141 to 160 (LLYI…IPAL), 164 to 186 (VGPV…DYPF), and 212 to 232 (VLVS…PVAI).

It belongs to the CysZ family.

The protein localises to the cell inner membrane. High affinity, high specificity proton-dependent sulfate transporter, which mediates sulfate uptake. Provides the sulfur source for the cysteine synthesis pathway. This is Sulfate transporter CysZ from Vibrio parahaemolyticus serotype O3:K6 (strain RIMD 2210633).